Consider the following 381-residue polypeptide: CCN family member 1 (381 aa).

Residues 1-24 (MSSRIARALALVVTLLHLTRLALS) form the signal peptide. In terms of domain architecture, IGFBP N-terminal spans 25 to 94 (TCPAACHCPL…TALKGICRAQ (70 aa)). 6 disulfides stabilise this stretch: Cys26–Cys50, Cys30–Cys52, Cys32–Cys53, Cys39–Cys56, Cys64–Cys78, and Cys70–Cys91. The VWFC domain occupies 98 to 164 (RPCEYNSRIY…GQCCEEWVCD (67 aa)). Phosphoserine is present on Ser188. The region spanning 228–273 (KCIVQTTSWSQCSKTCGTGISTRVTNDNPECRLVKETRICEVRPCG) is the TSP type-1 domain. A heparin-binding region spans residues 279–315 (SLKKGKKCSKTKKSPEPVRFTYAGCLSVKKYRPKYCG). Intrachain disulfides connect Cys286/Cys323, Cys303/Cys337, Cys314/Cys353, Cys317/Cys355, and Cys322/Cys359. In terms of domain architecture, CTCK spans 286–360 (CSKTKKSPEP…QSCKCNYNCP (75 aa)).

This sequence belongs to the CCN family. As to quaternary structure, interaction with integrins is heparin- and cell-type-dependent and promotes cell adhesion.

It is found in the secreted. In terms of biological role, promotes cell proliferation, chemotaxis, angiogenesis and cell adhesion. Appears to play a role in wound healing by up-regulating, in skin fibroblasts, the expression of a number of genes involved in angiogenesis, inflammation and matrix remodeling including VEGA-A, VEGA-C, MMP1, MMP3, TIMP1, uPA, PAI-1 and integrins alpha-3 and alpha-5. CCN1-mediated gene regulation is dependent on heparin-binding. Down-regulates the expression of alpha-1 and alpha-2 subunits of collagen type-1. Promotes cell adhesion and adhesive signaling through integrin alpha-6/beta-1, cell migration through integrin alpha-1/beta-5 and cell proliferation through integrin alpha-v/beta-3. The protein is CCN family member 1 (CCN1) of Pan troglodytes (Chimpanzee).